Here is a 414-residue protein sequence, read N- to C-terminus: Nucleoredoxin (414 aa).

In terms of domain architecture, Thioredoxin spans 131–305 (LLVKDDPEGL…ELNAVQLNEG (175 aa)).

The protein belongs to the nucleoredoxin family.

Its subcellular location is the cytoplasm. It is found in the cytosol. The protein localises to the nucleus. It carries out the reaction [protein]-dithiol + NAD(+) = [protein]-disulfide + NADH + H(+). The enzyme catalyses [protein]-dithiol + NADP(+) = [protein]-disulfide + NADPH + H(+). In terms of biological role, functions as a redox-dependent negative regulator of the Wnt signaling pathway. The protein is Nucleoredoxin (nxn) of Xenopus laevis (African clawed frog).